A 992-amino-acid polypeptide reads, in one-letter code: UPF0182 protein RHA1_ro06389 (992 aa).

7 consecutive transmembrane segments (helical) span residues 18-38 (VLLVLALVVAALLLVGPRLIS), 63-83 (LLLFLVVGVVVGGIVWLALLL), 114-134 (LFGLAIPIAVGLLAGLIAQSS), 174-194 (WLFVAVLLAFFASLVTHYIFG), 211-231 (VQLAVLAGTFILLKAVAYWFD), 260-280 (KLILLAIAVICAGAFFAAIFL), and 288-308 (MATALLVLSSILVGAVWPLVV). The disordered stretch occupies residues 904-948 (TGSVATAPSAEEGTPPETGTTPPVDQGAAPAPTAPATPPSGTDVS). Residues 908–934 (ATAPSAEEGTPPETGTTPPVDQGAAPA) show a composition bias toward low complexity.

Belongs to the UPF0182 family.

Its subcellular location is the cell membrane. The polypeptide is UPF0182 protein RHA1_ro06389 (Rhodococcus jostii (strain RHA1)).